The sequence spans 393 residues: NAD(P)H-quinone oxidoreductase subunit H, chloroplastic (393 aa).

The protein belongs to the complex I 49 kDa subunit family. In terms of assembly, NDH is composed of at least 16 different subunits, 5 of which are encoded in the nucleus.

Its subcellular location is the plastid. The protein localises to the chloroplast thylakoid membrane. It catalyses the reaction a plastoquinone + NADH + (n+1) H(+)(in) = a plastoquinol + NAD(+) + n H(+)(out). The enzyme catalyses a plastoquinone + NADPH + (n+1) H(+)(in) = a plastoquinol + NADP(+) + n H(+)(out). Its function is as follows. NDH shuttles electrons from NAD(P)H:plastoquinone, via FMN and iron-sulfur (Fe-S) centers, to quinones in the photosynthetic chain and possibly in a chloroplast respiratory chain. The immediate electron acceptor for the enzyme in this species is believed to be plastoquinone. Couples the redox reaction to proton translocation, and thus conserves the redox energy in a proton gradient. This Manihot esculenta (Cassava) protein is NAD(P)H-quinone oxidoreductase subunit H, chloroplastic.